A 644-amino-acid chain; its full sequence is Acetyl-coenzyme A synthetase (644 aa).

CoA contacts are provided by residues 190 to 193 (RGSK) and T308. ATP contacts are provided by residues 384–386 (GEP), 408–413 (DTWWQT), D497, and R512. S520 is a CoA binding site. R523 serves as a coordination point for ATP. 3 residues coordinate Mg(2+): V534, H536, and V539. Residue R581 participates in CoA binding. K606 is subject to N6-acetyllysine.

It belongs to the ATP-dependent AMP-binding enzyme family. It depends on Mg(2+) as a cofactor. In terms of processing, acetylated. Deacetylation by the SIR2-homolog deacetylase activates the enzyme.

It carries out the reaction acetate + ATP + CoA = acetyl-CoA + AMP + diphosphate. In terms of biological role, catalyzes the conversion of acetate into acetyl-CoA (AcCoA), an essential intermediate at the junction of anabolic and catabolic pathways. AcsA undergoes a two-step reaction. In the first half reaction, AcsA combines acetate with ATP to form acetyl-adenylate (AcAMP) intermediate. In the second half reaction, it can then transfer the acetyl group from AcAMP to the sulfhydryl group of CoA, forming the product AcCoA. The chain is Acetyl-coenzyme A synthetase from Magnetococcus marinus (strain ATCC BAA-1437 / JCM 17883 / MC-1).